A 782-amino-acid chain; its full sequence is Endonuclease MutS2 (782 aa).

336 to 343 is an ATP binding site; it reads GPNTGGKT. The region spanning 707–782 is the Smr domain; sequence LDLRGYRYED…GFGVTVATLK (76 aa).

Belongs to the DNA mismatch repair MutS family. MutS2 subfamily. In terms of assembly, homodimer. Binds to stalled ribosomes, contacting rRNA.

Its function is as follows. Endonuclease that is involved in the suppression of homologous recombination and thus may have a key role in the control of bacterial genetic diversity. Functionally, acts as a ribosome collision sensor, splitting the ribosome into its 2 subunits. Detects stalled/collided 70S ribosomes which it binds and splits by an ATP-hydrolysis driven conformational change. Acts upstream of the ribosome quality control system (RQC), a ribosome-associated complex that mediates the extraction of incompletely synthesized nascent chains from stalled ribosomes and their subsequent degradation. Probably generates substrates for RQC. This is Endonuclease MutS2 from Staphylococcus aureus (strain Mu50 / ATCC 700699).